A 62-amino-acid chain; its full sequence is Sauvatide (62 aa).

Residues 1–24 (MDILKKSLFLILFLGLVSISFCDG) form the signal peptide. The propeptide occupies 25-46 (EKRQDDDEANESEEKKEIHEVE). Lys58 bears the Lysine amide mark.

As to expression, expressed by the skin glands.

It localises to the secreted. Its function is as follows. Induces contraction of smooth muscle in isolated rat urinary bladder with an EC(50) value of 2.2nM. The sequence is that of Sauvatide from Phyllomedusa sauvagei (Sauvage's leaf frog).